The following is a 321-amino-acid chain: Meiotic drive suppressor wtf26 (321 aa).

The tract at residues 29–68 is disordered; it reads GLLPEYNSEEEGALPTYSDHARSSNPPNTHRENHSSGTTD. 6 consecutive transmembrane segments (helical) span residues 73-93, 110-130, 151-171, 188-208, 210-230, and 243-263; these read FLIK…LAVC, WTLF…LTYF, EMMI…FGCV, TISA…WTLW, ALSG…LVNG, and GYEI…LYEM.

Belongs to the WTF family. Homomer. Interacts with other proteins that exhibit high sequence similarity.

Its subcellular location is the spore membrane. The protein resides in the vacuole membrane. Its function is as follows. Acts as a suppressor component of the dual wtf meiotic drive system, and can suppress but not confer meiotic drive by compatible poisons. Wtf meiotic drive systems promote unequal transmission of alleles from the parental zygote to progeny spores by encoding a poison and an antidote from the same locus; the poison is trans-acting and forms toxic aggregates in all spores within an ascus, wherease the antidote is spore-specific and targets aggregates for degradation by the vacuole. Meiotic drive by wtf systems therefore lead to poisoning of all progeny that do not inherit the dual poison/antidote allele, or express a compatible antidote. This chain is Meiotic drive suppressor wtf26, found in Schizosaccharomyces kambucha (Fission yeast).